Here is a 285-residue protein sequence, read N- to C-terminus: Mitochondrial substrate carrier family protein S (285 aa).

Topologically, residues 1–9 are mitochondrial intermembrane; sequence MSTERGLKD. Solcar repeat units follow at residues 4 to 87, 96 to 183, and 197 to 283; these read ERGL…MKVL, LTVG…CKRY, and LNLP…VIKL. A helical membrane pass occupies residues 10 to 30; that stretch reads SIAGTVAGAACLFTGHPFDTI. The Mitochondrial matrix portion of the chain corresponds to 31–61; it reads RVRLQTSNTPIGIMECFRNTIKYEGFSGLYK. A helical membrane pass occupies residues 62-82; it reads GVTSPLFGMMFETAVLFAGYG. The Mitochondrial intermembrane segment spans residues 83 to 101; that stretch reads QMKVLLQKDENTPLTVGQC. A helical membrane pass occupies residues 102 to 122; that stretch reads AIAGGFAGVGASVVLTPVELV. Over 123-150 the chain is Mitochondrial matrix; the sequence is KCRLQVQTTGPQKYKGSLDCLVQILKEG. The chain crosses the membrane as a helical span at residues 151–172; it reads GIRGAYRGFTPTIAREFVGNMA. Topologically, residues 173 to 199 are mitochondrial intermembrane; that stretch reads FFSTYETCKRYFKNKENKPNDDDELNL. Residues 200 to 220 traverse the membrane as a helical segment; that stretch reads PALIISGGLGGMAYWTVLYPV. Residues 221–258 lie on the Mitochondrial matrix side of the membrane; the sequence is DVAKSKIQISEGAGPSPSIVKVLKEIYSKEGVKGLFRG. A helical membrane pass occupies residues 259 to 277; sequence YTPTIIRSFPANAAMFSVY. At 278-285 the chain is on the mitochondrial intermembrane side; the sequence is ELVIKLLG.

Belongs to the mitochondrial carrier (TC 2.A.29) family.

The protein resides in the mitochondrion inner membrane. Its function is as follows. Mitochondrial solute carriers shuttle metabolites, nucleotides, and cofactors through the mitochondrial inner membrane. Mediates the transport of acylcarnitines of different length across the mitochondrial inner membrane from the cytosol to the mitochondrial matrix for their oxidation by the mitochondrial fatty acid-oxidation pathway. The sequence is that of Mitochondrial substrate carrier family protein S (mcfS) from Dictyostelium discoideum (Social amoeba).